We begin with the raw amino-acid sequence, 439 residues long: uncharacterized protein (439 aa).

The first 22 residues, 1-22, serve as a signal peptide directing secretion; the sequence is MWVALKRFGFLSGLLALTVLSA. Cys-23 is lipidated: N-palmitoyl cysteine. A lipid anchor (S-diacylglycerol cysteine) is attached at Cys-23.

This sequence belongs to the MG067/MG068/MG395 family.

The protein localises to the cell membrane. This is an uncharacterized protein from Mycoplasma pneumoniae (strain ATCC 29342 / M129 / Subtype 1) (Mycoplasmoides pneumoniae).